A 543-amino-acid polypeptide reads, in one-letter code: Chaperonin GroEL (543 aa).

ATP is bound by residues 29–32, 86–90, G413, and D504; these read TVGP and DGTTT.

It belongs to the chaperonin (HSP60) family. As to quaternary structure, forms a cylinder of 14 subunits composed of two heptameric rings stacked back-to-back. Interacts with the co-chaperonin GroES.

It is found in the cytoplasm. The catalysed reaction is ATP + H2O + a folded polypeptide = ADP + phosphate + an unfolded polypeptide.. Together with its co-chaperonin GroES, plays an essential role in assisting protein folding. The GroEL-GroES system forms a nano-cage that allows encapsulation of the non-native substrate proteins and provides a physical environment optimized to promote and accelerate protein folding. The chain is Chaperonin GroEL from Mycoplasma pneumoniae (strain ATCC 29342 / M129 / Subtype 1) (Mycoplasmoides pneumoniae).